Here is a 212-residue protein sequence, read N- to C-terminus: FMN-dependent NADH:quinone oxidoreductase (212 aa).

FMN contacts are provided by residues Ser-10 and Ser-17–Ser-19.

Belongs to the azoreductase type 1 family. In terms of assembly, homodimer. The cofactor is FMN.

It catalyses the reaction 2 a quinone + NADH + H(+) = 2 a 1,4-benzosemiquinone + NAD(+). It carries out the reaction N,N-dimethyl-1,4-phenylenediamine + anthranilate + 2 NAD(+) = 2-(4-dimethylaminophenyl)diazenylbenzoate + 2 NADH + 2 H(+). Its function is as follows. Quinone reductase that provides resistance to thiol-specific stress caused by electrophilic quinones. Also exhibits azoreductase activity. Catalyzes the reductive cleavage of the azo bond in aromatic azo compounds to the corresponding amines. This is FMN-dependent NADH:quinone oxidoreductase from Malacoplasma penetrans (strain HF-2) (Mycoplasma penetrans).